The primary structure comprises 481 residues: Putative F-box/FBD/LRR-repeat protein At5g25850 (481 aa).

One can recognise an F-box domain in the interval 19–69 (INRLSQLSDPLICQILSHLPIKEVVTTSVLSTRWKNIWLSVPSLELIYSIF). LRR repeat units lie at residues 123 to 151 (VRRVRGNYFHELPLSLYVCETLVSLKLFH), 173 to 198 (VWFPNDATFERLVSSCPVLEDLKIDV), and 328 to 356 (HVTLRVSELKWLPNFLECCPNLKSLIVAF). Residues 401 to 452 (QLSFSSVPKCLLSSLQFVELNAQILRFDGEILNLAKYFLENSSILQKLTLHP) enclose the FBD domain.

This is Putative F-box/FBD/LRR-repeat protein At5g25850 from Arabidopsis thaliana (Mouse-ear cress).